Consider the following 478-residue polypeptide: Hexokinase (478 aa).

The region spanning 21-465 (EYLLKELTEL…LGAGAAIIAA (445 aa)) is the Hexokinase domain. The hexokinase small subdomain stretch occupies residues 75–208 (TGKEMGDYLA…KVPIEVVALI (134 aa)). K111 provides a ligand contact to ATP. Residues 151 to 177 (PLGFTFSYPASQGSINEGYLQRWTKGF) form a glucose-binding region. Residues 209–454 (NDTTGTLVAS…DPIVIVPAED (246 aa)) are hexokinase large subdomain.

It belongs to the hexokinase family. In terms of assembly, monomer.

The catalysed reaction is a D-hexose + ATP = a D-hexose 6-phosphate + ADP + H(+). The enzyme catalyses D-fructose + ATP = D-fructose 6-phosphate + ADP + H(+). It carries out the reaction D-glucose + ATP = D-glucose 6-phosphate + ADP + H(+). The protein operates within carbohydrate metabolism; hexose metabolism. Its pathway is carbohydrate degradation; glycolysis; D-glyceraldehyde 3-phosphate and glycerone phosphate from D-glucose: step 1/4. In terms of biological role, catalyzes the phosphorylation of hexose, such as D-glucose and D-fructose, to hexose 6-phosphate (D-glucose 6-phosphate and D-fructose 6-phosphate, respectively). Mediates the initial step of glycolysis by catalyzing phosphorylation of D-glucose to D-glucose 6-phosphate. This chain is Hexokinase (HXK), found in Schwanniomyces occidentalis (Yeast).